The following is a 133-amino-acid chain: Ribosome-binding factor A (133 aa).

Belongs to the RbfA family. As to quaternary structure, monomer. Binds 30S ribosomal subunits, but not 50S ribosomal subunits or 70S ribosomes.

The protein resides in the cytoplasm. One of several proteins that assist in the late maturation steps of the functional core of the 30S ribosomal subunit. Associates with free 30S ribosomal subunits (but not with 30S subunits that are part of 70S ribosomes or polysomes). Required for efficient processing of 16S rRNA. May interact with the 5'-terminal helix region of 16S rRNA. The chain is Ribosome-binding factor A from Bordetella bronchiseptica (strain ATCC BAA-588 / NCTC 13252 / RB50) (Alcaligenes bronchisepticus).